The sequence spans 324 residues: Beta-ketoacyl-[acyl-carrier-protein] synthase III (324 aa).

Active-site residues include C112 and H249. An ACP-binding region spans residues 250–254; it reads QANRR. N279 is an active-site residue.

Belongs to the thiolase-like superfamily. FabH family. Homodimer.

The protein localises to the cytoplasm. The catalysed reaction is malonyl-[ACP] + acetyl-CoA + H(+) = 3-oxobutanoyl-[ACP] + CO2 + CoA. It functions in the pathway lipid metabolism; fatty acid biosynthesis. Functionally, catalyzes the condensation reaction of fatty acid synthesis by the addition to an acyl acceptor of two carbons from malonyl-ACP. Catalyzes the first condensation reaction which initiates fatty acid synthesis and may therefore play a role in governing the total rate of fatty acid production. Possesses both acetoacetyl-ACP synthase and acetyl transacylase activities. Its substrate specificity determines the biosynthesis of branched-chain and/or straight-chain of fatty acids. The sequence is that of Beta-ketoacyl-[acyl-carrier-protein] synthase III from Streptococcus equi subsp. equi (strain 4047).